Reading from the N-terminus, the 550-residue chain is Arginine--tRNA ligase (550 aa).

The short motif at 125-135 is the 'HIGH' region element; sequence ANPTGPLHIGH.

Belongs to the class-I aminoacyl-tRNA synthetase family. Monomer.

It is found in the cytoplasm. The catalysed reaction is tRNA(Arg) + L-arginine + ATP = L-arginyl-tRNA(Arg) + AMP + diphosphate. The sequence is that of Arginine--tRNA ligase from Lawsonia intracellularis (strain PHE/MN1-00).